The primary structure comprises 237 residues: DNA repair protein RecO (237 aa).

The protein belongs to the RecO family.

Its function is as follows. Involved in DNA repair and RecF pathway recombination. The protein is DNA repair protein RecO of Rickettsia rickettsii (strain Iowa).